Reading from the N-terminus, the 247-residue chain is Cell division protein ZapD (247 aa).

This sequence belongs to the ZapD family. In terms of assembly, interacts with FtsZ.

The protein localises to the cytoplasm. In terms of biological role, cell division factor that enhances FtsZ-ring assembly. Directly interacts with FtsZ and promotes bundling of FtsZ protofilaments, with a reduction in FtsZ GTPase activity. This is Cell division protein ZapD from Shigella sonnei (strain Ss046).